The primary structure comprises 375 residues: Leucoanthocyanidin dioxygenase 1 (375 aa).

The Fe2OG dioxygenase domain occupies 218–317 (LLLQLKINYY…RLSWVVFCEP (100 aa)). Positions 242, 244, and 298 each coordinate Fe cation. Residue arginine 308 participates in 2-oxoglutarate binding.

Belongs to the iron/ascorbate-dependent oxidoreductase family. L-ascorbate is required as a cofactor. Fe(2+) serves as cofactor.

The enzyme catalyses a (2R,3S,4S)-leucoanthocyanidin + 2-oxoglutarate + O2 = a 4-H-anthocyanidin with a 3-hydroxy group + succinate + CO2 + 2 H2O. It functions in the pathway pigment biosynthesis; anthocyanin biosynthesis. Involved in anthocyanin and protoanthocyanidin biosynthesis by catalyzing the oxidation of leucoanthocyanidins into anthocyanidins. The sequence is that of Leucoanthocyanidin dioxygenase 1 from Oryza sativa subsp. japonica (Rice).